Consider the following 116-residue polypeptide: CDKN2AIP N-terminal-like protein (116 aa).

Methionine 1 is modified (N-acetylmethionine). Positions alanine 24–serine 116 constitute an XRN2-binding (XTBD) domain.

This sequence belongs to the CARF family. Interacts with XRN2; the interaction is direct.

This chain is CDKN2AIP N-terminal-like protein (Cdkn2aipnl), found in Mus musculus (Mouse).